The sequence spans 151 residues: MPAPAEVQAATLEKFIQGWAGWTPDGFLANWSEDCTQKTLPFSSGVPLRTRADTEKLFPVLMSLMSNFTLDIHNVVHDAPQGKAVIYALTKADTPFGPYRNEHAIFLWFNEIGDRVQKIEEMFDAVVMQEFLPKLDKYVADNKMQLGAKFS.

The protein belongs to the avfA family.

It participates in secondary metabolite biosynthesis. In terms of biological role, monooxygenase; part of the gene cluster that mediates the biosynthesis of the tetrahydroxanthone dimer neosartorin, which exhibits antibacterial activity. The two different monomeric units appear to be synthesized by the same set of enzymes, among which the Baeyer-Villiger monooxygenase nsrF is the key enzyme for the divergence of the biosynthetic routes. The pathway begins with the synthesis of atrochrysone thioester by the polyketide synthase nsrB. The atrochrysone carboxyl ACP thioesterase nsrC then breaks the thioester bond and releases the atrochrysone carboxylic acid from AacuL. Atrochrysone carboxylic acid is decarboxylated by the decarboxylase nsrE, and oxidized by the anthrone oxygenase nsrD to yield emodin. Emodin is then reduced to emodin hydroquinone by the oxidoreductase nsrR. A-ring reduction by the short chain dehydrogenase nsrJ, dehydration by the scytalone dehydratase-like protein nsrI and probable spontaneous re-oxidation, results in overall deoxygenation to chrysophanol. The Baeyer-Villiger monooxygenase nsrF accepts chrysophanol as a substrate to insert one oxygen atom at two different positions to yield the precursors of both monomric units. NsrF is promiscuous/flexible in interacting with the 2 (non methylated and methylated) aromatic rings of chrysophanol, thus diverging the biosynthetic pathway at this point. After the hydrolysis of the lactones, methylesterification by the methyltransferase nsrG yields respectively moniliphenone and 2,2',6'-trihydroxy-4-methyl-6-methoxya-cyldiphenylmethanone. The next steps are the hydroxylation by the FAD-dependent monooxygenase nsrK, followed by isomerization by the monooxygenase nsrQ. The short chain dehydrogenase/reductase nsrO then catalyzes the C-5 ketoreduction to give the xanthone skeleton of blennolide C and 5-acetylblennolide A. The acetyltransferase nsrL has a strict substrate specificity and uses only blennolide A but not blennolide C to yield 5-acetylblennolide A as the single-acetylated product. In the final step of the biosynthesis, the heterodimerization of the 2 xanthones, blennolide C and 5-acetylblennolide A, is catalyzed by the cytochrome P450 monooxygenase nsrP. NsrP can utilize at least three different xanthones as its substrates to perform the dimerization reaction. The chain is Monooxygenase nsrQ from Aspergillus novofumigatus (strain IBT 16806).